The chain runs to 378 residues: tRNA (guanine(26)-N(2))-dimethyltransferase (378 aa).

Residues 4–374 (KEVTEGKVRI…KGYEEIIRCV (371 aa)) form the Trm1 methyltransferase domain. The S-adenosyl-L-methionine site is built by arginine 44, arginine 69, aspartate 87, aspartate 114, and alanine 115. Zn(2+) is bound by residues cysteine 246, cysteine 249, cysteine 263, and cysteine 266.

It belongs to the class I-like SAM-binding methyltransferase superfamily. Trm1 family.

The catalysed reaction is guanosine(26) in tRNA + 2 S-adenosyl-L-methionine = N(2)-dimethylguanosine(26) in tRNA + 2 S-adenosyl-L-homocysteine + 2 H(+). Functionally, dimethylates a single guanine residue at position 26 of a number of tRNAs using S-adenosyl-L-methionine as donor of the methyl groups. In Saccharolobus islandicus (strain L.S.2.15 / Lassen #1) (Sulfolobus islandicus), this protein is tRNA (guanine(26)-N(2))-dimethyltransferase.